The sequence spans 209 residues: dITP/XTP pyrophosphatase (209 aa).

22–27 is a binding site for substrate; the sequence is SHNQGK. The active-site Proton acceptor is Asp-83. Residue Asp-83 coordinates Mg(2+). Residues Ser-84, 167 to 170, Lys-190, and 195 to 196 each bind substrate; these read FGYD and HR.

The protein belongs to the HAM1 NTPase family. Homodimer. It depends on Mg(2+) as a cofactor.

The enzyme catalyses XTP + H2O = XMP + diphosphate + H(+). The catalysed reaction is dITP + H2O = dIMP + diphosphate + H(+). It catalyses the reaction ITP + H2O = IMP + diphosphate + H(+). Pyrophosphatase that catalyzes the hydrolysis of nucleoside triphosphates to their monophosphate derivatives, with a high preference for the non-canonical purine nucleotides XTP (xanthosine triphosphate), dITP (deoxyinosine triphosphate) and ITP. Seems to function as a house-cleaning enzyme that removes non-canonical purine nucleotides from the nucleotide pool, thus preventing their incorporation into DNA/RNA and avoiding chromosomal lesions. In Zymomonas mobilis subsp. mobilis (strain ATCC 31821 / ZM4 / CP4), this protein is dITP/XTP pyrophosphatase.